The primary structure comprises 703 residues: MADRRRQRASQDTEDEESGASGSDSGGSPLRGGGSCSGSAGGGGSGSLPSQRGGRTGALHLRRVESGGAKSAEESECESEDGIEGDAVLSDYESAEDSEGEEGEYSEEENSKVELKSEANDAVNSSTKEEKGEEKPDTKSTVTGERQSGDGQESTEPVENKVGKKGPKHLDDDEDRKNPAYIPRKGLFFEHDLRGQTQEEEVRPKGRQRKLWKDEGRWEHDKFREDEQAPKSRQELIALYGYDIRSAHNPDDIKPRRIRKPRYGSPPQRDPNWNGERLNKSHRHQGLGGTLPPRTFINRNAAGTGRMSAPRNYSRSGGFKEGRAGFRPVEAGGQHGGRSGETVKHEISYRSRRLEQTSVRDPSPEADAPVLGSPEKEEAASEPPAAAPDAAPPPPDRPIEKKSYSRARRTRTKVGDAVKLAEEVPPPPEGLIPAPPVPETTPTPPTKTGTWEAPVDSSTSGLEQDVAQLNIAEQNWSPGQPSFLQPRELRGMPNHIHMGAGPPPQFNRMEEMGVQGGRAKRYSSQRQRPVPEPPAPPVHISIMEGHYYDPLQFQGPIYTHGDSPAPLPPQGMLVQPGMNLPHPGLHPHQTPAPLPNPGLYPPPVSMSPGQPPPQQLLAPTYFSAPGVMNFGNPSYPYAPGALPPPPPPHLYPNTQAPSQVYGGVTYYNPAQQQVQPKPSPPRRTPQPVTIKPPPPEVVSRGSS.

The interval 1–462 is disordered; it reads MADRRRQRAS…APVDSSTSGL (462 aa). The span at 19-28 shows a compositional bias: low complexity; that stretch reads GASGSDSGGS. Positions 29–46 are enriched in gly residues; that stretch reads PLRGGGSCSGSAGGGGSG. Serine 35 is subject to Phosphoserine. Composition is skewed to acidic residues over residues 74–84 and 93–108; these read ESECESEDGIE and ESAEDSEGEEGEYSEE. Positions 95-131 form a coiled coil; sequence AEDSEGEEGEYSEEENSKVELKSEANDAVNSSTKEEK. Basic and acidic residues-rich tracts occupy residues 109–119 and 127–138; these read ENSKVELKSEA and TKEEKGEEKPDT. Serine 117 carries the post-translational modification Phosphoserine. The necessary for RNA-binding, interaction with MAGOH and localization in nucleus speckles stretch occupies residues 137–283; the sequence is DTKSTVTGER…NGERLNKSHR (147 aa). The interval 137-283 is sufficient to form the EJC; it reads DTKSTVTGER…NGERLNKSHR (147 aa). Positions 139 to 157 are enriched in polar residues; sequence KSTVTGERQSGDGQESTEP. Residue serine 148 is modified to Phosphoserine. Over residues 158 to 178 the composition is skewed to basic and acidic residues; that stretch reads VENKVGKKGPKHLDDDEDRKN. Positions 204-210 match the Nuclear localization signal 1 motif; it reads PKGRQRK. Composition is skewed to basic and acidic residues over residues 211-234 and 245-255; these read LWKDEGRWEHDKFREDEQAPKSRQ and RSAHNPDDIKP. A Nuclear localization signal 2 motif is present at residues 254–262; the sequence is KPRRIRKPR. Serine 265 is subject to Phosphoserine. Residues 341-355 show a composition bias toward basic and acidic residues; sequence ETVKHEISYRSRRLE. Residue threonine 357 is modified to Phosphothreonine. Residues serine 363 and serine 373 each carry the phosphoserine modification. A necessary for localization in cytoplasmic stress granules region spans residues 377–703; the sequence is EEAASEPPAA…PPEVVSRGSS (327 aa). A compositionally biased stretch (basic and acidic residues) spans 413–422; sequence KVGDAVKLAE. Residues 424–445 are compositionally biased toward pro residues; it reads VPPPPEGLIPAPPVPETTPTPP. The Nuclear export signal motif lies at 462-466; it reads LEQDV. Serine 477 carries the post-translational modification Phosphoserine. Disordered regions lie at residues 492–538 and 633–703; these read MPNH…APPV and PSYP…RGSS. 2 stretches are compositionally biased toward pro residues: residues 641-650 and 677-696; these read ALPPPPPPHL and KPSPPRRTPQPVTIKPPPPE.

It belongs to the CASC3 family. In terms of assembly, identified in the spliceosome C complex. Component of the mRNA splicing-dependent exon junction complex (EJC), which contains at least CASC3, EIF4A3, MAGOH, NXF1 and RBM8A/Y14. Identified in a complex composed of the EJC core, UPF3B and UPF2. The EJC core can also interact with UPF3A (in vitro). Forms homooligomers. Interacts with STAU in an RNA-dependent manner. Interacts with DHX34; the interaction is RNA-independent. ADP-ribosylated by tankyrase TNKS and TNKS2. Poly-ADP-ribosylated protein is recognized by RNF146, followed by ubiquitination. In terms of processing, ubiquitinated by RNF146 when poly-ADP-ribosylated, leading to its degradation. Widely expressed. Overexpressed in breast cancers and metastasis, as well as in gastric cancers.

The protein localises to the cytoplasm. Its subcellular location is the perinuclear region. It is found in the nucleus. The protein resides in the nucleus speckle. It localises to the stress granule. The protein localises to the cytoplasmic ribonucleoprotein granule. Its subcellular location is the cell projection. It is found in the dendrite. Its function is as follows. Required for pre-mRNA splicing as component of the spliceosome. Core component of the splicing-dependent multiprotein exon junction complex (EJC) deposited at splice junctions on mRNAs. The EJC is a dynamic structure consisting of core proteins and several peripheral nuclear and cytoplasmic associated factors that join the complex only transiently either during EJC assembly or during subsequent mRNA metabolism. The EJC marks the position of the exon-exon junction in the mature mRNA for the gene expression machinery and the core components remain bound to spliced mRNAs throughout all stages of mRNA metabolism thereby influencing downstream processes including nuclear mRNA export, subcellular mRNA localization, translation efficiency and nonsense-mediated mRNA decay (NMD). Stimulates the ATPase and RNA-helicase activities of EIF4A3. Plays a role in the stress response by participating in cytoplasmic stress granules assembly and by favoring cell recovery following stress. Component of the dendritic ribonucleoprotein particles (RNPs) in hippocampal neurons. May play a role in mRNA transport. Binds spliced mRNA in sequence-independent manner, 20-24 nucleotides upstream of mRNA exon-exon junctions. Binds poly(G) and poly(U) RNA homomer. The protein is Protein CASC3 (CASC3) of Homo sapiens (Human).